The primary structure comprises 200 residues: dTDP-4-dehydrorhamnose 3,5-epimerase (200 aa).

Substrate contacts are provided by residues R21, E26, 45–47 (QVN), and R57. Residue H60 is the Proton acceptor of the active site. Residues K70 and H116 each contribute to the substrate site. Y129 serves as the catalytic Proton donor. 2 residues coordinate substrate: E140 and K165.

The protein belongs to the dTDP-4-dehydrorhamnose 3,5-epimerase family.

It catalyses the reaction dTDP-4-dehydro-6-deoxy-alpha-D-glucose = dTDP-4-dehydro-beta-L-rhamnose. It participates in carbohydrate biosynthesis; dTDP-L-rhamnose biosynthesis. It functions in the pathway antibiotic biosynthesis; streptomycin biosynthesis. In terms of biological role, involved in the biosynthesis of the dihydrostreptose moiety of streptomycin. Catalyzes the epimerization of the C3' and C5'positions of dTDP-6-deoxy-D-xylo-4-hexulose, forming dTDP-6-deoxy-L-lyxo-4-hexulose. The polypeptide is dTDP-4-dehydrorhamnose 3,5-epimerase (Streptomyces griseus).